The following is a 131-amino-acid chain: Small ribosomal subunit protein eS6 (131 aa).

Belongs to the eukaryotic ribosomal protein eS6 family.

In Halobacterium salinarum (strain ATCC 29341 / DSM 671 / R1), this protein is Small ribosomal subunit protein eS6.